Reading from the N-terminus, the 196-residue chain is MSDERYQQRQQRVKEKVDARVAQAQDERGIIIVFTGNGKGKTTAAFGTATRAVGHGKKVGVVQFIKGTWPNGERNLLEPHGVEFQVMATGFTWDTQNRESDTAACREVWQHAKRMLADSSLDMVLLDELTYMVAYDYLPLEEVVQALNERPHQQTVIITGRGCHRDILELADTVSELRPVKHAFDAGVKAQIGIDY.

Residue 36–42 (GNGKGKT) participates in ATP binding.

This sequence belongs to the Cob(I)alamin adenosyltransferase family.

It is found in the cytoplasm. The enzyme catalyses 2 cob(II)yrinate a,c diamide + reduced [electron-transfer flavoprotein] + 2 ATP = 2 adenosylcob(III)yrinate a,c-diamide + 2 triphosphate + oxidized [electron-transfer flavoprotein] + 3 H(+). It catalyses the reaction 2 cob(II)alamin + reduced [electron-transfer flavoprotein] + 2 ATP = 2 adenosylcob(III)alamin + 2 triphosphate + oxidized [electron-transfer flavoprotein] + 3 H(+). It functions in the pathway cofactor biosynthesis; adenosylcobalamin biosynthesis; adenosylcobalamin from cob(II)yrinate a,c-diamide: step 2/7. Functionally, required for both de novo synthesis of the corrin ring for the assimilation of exogenous corrinoids. Participates in the adenosylation of a variety of incomplete and complete corrinoids. This chain is Corrinoid adenosyltransferase (btuR), found in Escherichia coli O6:H1 (strain CFT073 / ATCC 700928 / UPEC).